The following is a 116-amino-acid chain: Large ribosomal subunit protein bL17 (116 aa).

Belongs to the bacterial ribosomal protein bL17 family. Part of the 50S ribosomal subunit. Contacts protein L32.

This chain is Large ribosomal subunit protein bL17, found in Helicobacter acinonychis (strain Sheeba).